The following is a 423-amino-acid chain: MPSLFAQSLAIIATLQATLGLATPVSAPDTVIGKHAGGYVNAVYFTNWGIYGRNYQPADLPASQISHVLYSFLNLSNNGTVYSGDSWADIDKHYPNDSWNDVGTNVYGCVKQLYLLKKANRNMKTMLSIGGWTWSTNFPAAASTAATRSNFAKSAVTIMKDWGFDGIDVDWEYPADDVQATNMVLLLQAIREELDAYAAKFAQGYHFQLSIAAPAGPANYNKLHLGDLGKVLDYINLMAYDFSGSWSNSSAHNANLYAIRANLNAPFNTDHAVNDYIKGGVPASKIVLALPIYGNSFQKTNGIGKPFSGAGDGSWENGIWDYKVHSKAGADGIYDDGDKGYYSYDPSVKELISIDTPDITKDKVTYLKSKGLGGSMFWEASSDRSGSQSLIGTSSNKLGGPDSTENLLNYPDSKYDNMRKQMA.

The signal sequence occupies residues 1–22; that stretch reads MPSLFAQSLAIIATLQATLGLA. Residues 39–401 form the GH18 domain; it reads YVNAVYFTNW…GTSSNKLGGP (363 aa). N-linked (GlcNAc...) asparagine glycosylation is found at N74, N78, and N96. Residues 103–104 and 130–133 contribute to the chitin site; these read GT and GGWT. The active-site Proton donor is E172. Chitin is bound by residues Y173 and 238 to 241; that span reads MAYD. N248 carries N-linked (GlcNAc...) asparagine glycosylation. Chitin is bound at residue W378. Positions 380-423 are disordered; it reads ASSDRSGSQSLIGTSSNKLGGPDSTENLLNYPDSKYDNMRKQMA. Residues 383–407 are compositionally biased toward polar residues; sequence DRSGSQSLIGTSSNKLGGPDSTENL. Residues 413–423 show a composition bias toward basic and acidic residues; sequence SKYDNMRKQMA.

This sequence belongs to the glycosyl hydrolase 18 family. Chitinase class V subfamily.

It is found in the secreted. It catalyses the reaction Random endo-hydrolysis of N-acetyl-beta-D-glucosaminide (1-&gt;4)-beta-linkages in chitin and chitodextrins.. Its function is as follows. Secreted chitinase involved in the degradation of chitin, a component of the cell walls of fungi and exoskeletal elements of some animals (including worms and arthropods). Participates in the infection process and directly acts in the penetration process of the host cuticle. This is Endochitinase 1 (chit1) from Metarhizium anisopliae (Entomophthora anisopliae).